The chain runs to 84 residues: Putative defensin-like protein 165 (84 aa).

The N-terminal stretch at 1–27 (MSTKLFSYFMLLVVLFSVLTIIPKTEA) is a signal peptide. Intrachain disulfides connect Cys31-Cys78, Cys41-Cys60, Cys46-Cys72, and Cys50-Cys74.

It belongs to the DEFL family.

It is found in the secreted. The polypeptide is Putative defensin-like protein 165 (LCR12) (Arabidopsis thaliana (Mouse-ear cress)).